The chain runs to 431 residues: Enolase (431 aa).

Residue Gln167 participates in (2R)-2-phosphoglycerate binding. Glu209 (proton donor) is an active-site residue. 3 residues coordinate Mg(2+): Asp246, Glu290, and Asp317. (2R)-2-phosphoglycerate-binding residues include Lys342, Arg371, Ser372, and Lys393. Lys342 (proton acceptor) is an active-site residue.

This sequence belongs to the enolase family. Component of the RNA degradosome, a multiprotein complex involved in RNA processing and mRNA degradation. Mg(2+) serves as cofactor.

The protein localises to the cytoplasm. The protein resides in the secreted. Its subcellular location is the cell surface. It catalyses the reaction (2R)-2-phosphoglycerate = phosphoenolpyruvate + H2O. It functions in the pathway carbohydrate degradation; glycolysis; pyruvate from D-glyceraldehyde 3-phosphate: step 4/5. Functionally, catalyzes the reversible conversion of 2-phosphoglycerate (2-PG) into phosphoenolpyruvate (PEP). It is essential for the degradation of carbohydrates via glycolysis. This chain is Enolase, found in Serratia proteamaculans (strain 568).